The following is a 433-amino-acid chain: Urokinase-type plasminogen activator (433 aa).

A signal peptide spans 1–20 (MRVLLACLLVCALVVSDSDG). One can recognise an EGF-like domain in the interval 29-65 (GESNCGCLNGGKCVTYKYFSNIQRCSCPKKFQGEHCE). 6 disulfide bridges follow: cysteine 33/cysteine 41, cysteine 35/cysteine 53, cysteine 55/cysteine 64, cysteine 72/cysteine 153, cysteine 93/cysteine 135, and cysteine 124/cysteine 148. Positions 36 to 59 (LNGGKCVTYKYFSNIQRCSCPKKF) are binds urokinase plasminogen activator surface receptor. In terms of domain architecture, Kringle spans 72–153 (CYQGNGHSYR…FVQFCMVQDC (82 aa)). Residues 154–180 (SVGKSPSSPREKEEFQCGQKALRPRFK) form a connecting peptide region. Residue serine 160 is modified to Phosphoserine. Disulfide bonds link cysteine 170-cysteine 301, cysteine 211-cysteine 227, cysteine 219-cysteine 290, cysteine 315-cysteine 384, cysteine 347-cysteine 363, and cysteine 374-cysteine 402. The Peptidase S1 domain occupies 181 to 426 (IVGGQVTNAE…FLPWINTHTR (246 aa)). Active-site charge relay system residues include histidine 226 and aspartate 277. The Charge relay system role is filled by serine 378.

Belongs to the peptidase S1 family. Found in high and low molecular mass forms. Each consists of two chains, A and B. The high molecular mass form contains a long chain A which is cleaved to yield a short chain A. Forms heterodimer with SERPINA5. Binds LRP1B; binding is followed by internalization and degradation. Interacts with MRC2. Interacts with PLAUR. In complex with SERPINE1, interacts with PLAUR/uPAR. Interacts with SORL1 and LRP1, either alone or in complex with SERPINE1; these interactions are abolished in the presence of LRPAP1/RAP. The ternary complex composed of PLAUR-PLAU-PAI1 also interacts with SORLA. In terms of processing, produced as an inactive single-chain protein (pro-uPA or sc-uPA), is processed into the active disulfide-linked two-chain form of PLAU/uPA by a proteolytic event mediated, at least, by TMPRSS4.

It localises to the secreted. The catalysed reaction is Specific cleavage of Arg-|-Val bond in plasminogen to form plasmin.. With respect to regulation, inhibited by SERPINA5. Inhibited by SERPINE1. Specifically cleaves the zymogen plasminogen to form the active enzyme plasmin. In Bos taurus (Bovine), this protein is Urokinase-type plasminogen activator (PLAU).